We begin with the raw amino-acid sequence, 390 residues long: Protein AC109 (390 aa).

It is found in the host cytoplasm. The protein resides in the host nucleus. In terms of biological role, plays a role in the transport of the budded virion (BV) to the host nucleus and for occlusion of viral progeny. This chain is Protein AC109 (ORF109), found in Lepidoptera (butterflies and moths).